A 103-amino-acid chain; its full sequence is QPKVAPTITLFPPSKEELNEATKATLVCLINDFYPSPVTVDWVIDGSTRSGETTAPQRQSNSQYMASSYLSLSASDWSSHETYTCRVTHNGTSITKTLKRSEC.

One can recognise an Ig-like domain in the interval 6-99; that stretch reads PTITLFPPSK…NGTSITKTLK (94 aa). Cysteines 28 and 85 form a disulfide.

The chain is Ig lambda chain C region from Gallus gallus (Chicken).